The chain runs to 130 residues: Ribonuclease P protein component 2 (130 aa).

It belongs to the eukaryotic/archaeal RNase P protein component 2 family. As to quaternary structure, consists of a catalytic RNA component and at least 4-5 protein subunits.

It localises to the cytoplasm. It catalyses the reaction Endonucleolytic cleavage of RNA, removing 5'-extranucleotides from tRNA precursor.. Part of ribonuclease P, a protein complex that generates mature tRNA molecules by cleaving their 5'-ends. In Methanococcus maripaludis (strain C7 / ATCC BAA-1331), this protein is Ribonuclease P protein component 2.